A 341-amino-acid chain; its full sequence is DNA-directed RNA polymerase subunit alpha (341 aa).

Residues 1 to 233 (MVREEVPVST…DLFIPFLHAE (233 aa)) form an alpha N-terminal domain (alpha-NTD) region. Residues 266–341 (IILKRIFIDQ…LKNSNQFESR (76 aa)) are alpha C-terminal domain (alpha-CTD).

It belongs to the RNA polymerase alpha chain family. In plastids the minimal PEP RNA polymerase catalytic core is composed of four subunits: alpha, beta, beta', and beta''. When a (nuclear-encoded) sigma factor is associated with the core the holoenzyme is formed, which can initiate transcription.

The protein resides in the plastid. It localises to the chloroplast. It catalyses the reaction RNA(n) + a ribonucleoside 5'-triphosphate = RNA(n+1) + diphosphate. DNA-dependent RNA polymerase catalyzes the transcription of DNA into RNA using the four ribonucleoside triphosphates as substrates. This Nymphaea alba (White water-lily) protein is DNA-directed RNA polymerase subunit alpha.